Reading from the N-terminus, the 55-residue chain is Ferredoxin (55 aa).

4Fe-4S ferredoxin-type domains are found at residues 2–27 (YKIT…SESD) and 28–55 (AVRV…IVEG). Residues Cys-8, Cys-11, Cys-14, Cys-18, Cys-37, Cys-40, Cys-43, and Cys-47 each coordinate [4Fe-4S] cluster.

It depends on [4Fe-4S] cluster as a cofactor.

In terms of biological role, ferredoxins are iron-sulfur proteins that transfer electrons in a wide variety of metabolic reactions. The protein is Ferredoxin of Clostridium sp. (strain M-E).